The primary structure comprises 243 residues: rRNA adenine N-6-methyltransferase (243 aa).

6 residues coordinate S-adenosyl-L-methionine: Asn11, Ile13, Gly38, Glu59, Asp84, and Asn101.

It belongs to the class I-like SAM-binding methyltransferase superfamily. rRNA adenine N(6)-methyltransferase family.

The enzyme catalyses adenosine(2085) in 23S rRNA + 2 S-adenosyl-L-methionine = N(6)-dimethyladenosine(2085) in 23S rRNA + 2 S-adenosyl-L-homocysteine + 2 H(+). This protein produces a dimethylation of the adenine residue at position 2085 in 23S rRNA, resulting in reduced affinity between ribosomes and macrolide-lincosamide-streptogramin B antibiotics. In Staphylococcus aureus (strain Mu50 / ATCC 700699), this protein is rRNA adenine N-6-methyltransferase (ermA1).